The primary structure comprises 144 residues: uncharacterized protein (144 aa).

Residues 125–135 (PQQQNNHQLQS) are compositionally biased toward polar residues. The disordered stretch occupies residues 125 to 144 (PQQQNNHQLQSKPKAASISR).

This is an uncharacterized protein from Rickettsia prowazekii (strain Madrid E).